The sequence spans 424 residues: UPF0597 protein Shewana3_2972 (424 aa).

This sequence belongs to the UPF0597 family.

This is UPF0597 protein Shewana3_2972 from Shewanella sp. (strain ANA-3).